The primary structure comprises 297 residues: Nucleotide-binding protein Bxeno_A0336 (297 aa).

8 to 15 (GISGSGKS) contributes to the ATP binding site. 57–60 (DARS) is a binding site for GTP.

This sequence belongs to the RapZ-like family.

Functionally, displays ATPase and GTPase activities. In Paraburkholderia xenovorans (strain LB400), this protein is Nucleotide-binding protein Bxeno_A0336.